We begin with the raw amino-acid sequence, 161 residues long: Mediator of RNA polymerase II transcription subunit 31 (161 aa).

The tract at residues 124–161 (GTGVDEQGAQDTQEGEGEQKQNKEEDAQDAQENTESKT) is disordered.

Belongs to the Mediator complex subunit 31 family. Component of the Mediator complex.

Its subcellular location is the nucleus. In terms of biological role, component of the Mediator complex, a coactivator involved in the regulated transcription of nearly all RNA polymerase II-dependent genes. Mediator functions as a bridge to convey information from gene-specific regulatory proteins to the basal RNA polymerase II transcription machinery. Mediator is recruited to promoters by direct interactions with regulatory proteins and serves as a scaffold for the assembly of a functional preinitiation complex with RNA polymerase II and the general transcription factors. The polypeptide is Mediator of RNA polymerase II transcription subunit 31 (soh1) (Aspergillus clavatus (strain ATCC 1007 / CBS 513.65 / DSM 816 / NCTC 3887 / NRRL 1 / QM 1276 / 107)).